Here is a 360-residue protein sequence, read N- to C-terminus: Pyrimidine monooxygenase RutA (360 aa).

Residues 49-50, N115, E124, 140-141, and S190 each bind FMN; these read IK and RY.

Belongs to the NtaA/SnaA/DszA monooxygenase family. RutA subfamily.

It carries out the reaction uracil + FMNH2 + NADH + O2 = (Z)-3-ureidoacrylate + FMN + NAD(+) + H2O + H(+). The enzyme catalyses thymine + FMNH2 + NADH + O2 = (Z)-2-methylureidoacrylate + FMN + NAD(+) + H2O + H(+). Functionally, catalyzes the pyrimidine ring opening between N-3 and C-4 by an unusual flavin hydroperoxide-catalyzed mechanism, adding oxygen atoms in the process to yield ureidoacrylate peracid, that immediately reacts with FMN forming ureidoacrylate and FMN-N(5)-oxide. The FMN-N(5)-oxide reacts spontaneously with NADH to produce FMN. Requires the flavin reductase RutF to regenerate FMN in vivo. This is Pyrimidine monooxygenase RutA from Pseudomonas syringae pv. syringae (strain B728a).